We begin with the raw amino-acid sequence, 281 residues long: Pantothenate synthetase (281 aa).

Residue 30-37 coordinates ATP; the sequence is MGYLHEGH. H37 acts as the Proton donor in catalysis. Q61 contacts (R)-pantoate. Residue Q61 coordinates beta-alanine. 147-150 is a binding site for ATP; that stretch reads GEKD. Q153 contacts (R)-pantoate. Residues I176 and 184–187 contribute to the ATP site; that span reads KSSR.

Belongs to the pantothenate synthetase family. Homodimer.

It localises to the cytoplasm. It carries out the reaction (R)-pantoate + beta-alanine + ATP = (R)-pantothenate + AMP + diphosphate + H(+). The protein operates within cofactor biosynthesis; (R)-pantothenate biosynthesis; (R)-pantothenate from (R)-pantoate and beta-alanine: step 1/1. Catalyzes the condensation of pantoate with beta-alanine in an ATP-dependent reaction via a pantoyl-adenylate intermediate. This chain is Pantothenate synthetase, found in Clostridium botulinum (strain Okra / Type B1).